The sequence spans 311 residues: Aspartate carbamoyltransferase catalytic subunit (311 aa).

Residues Arg58 and Thr59 each coordinate carbamoyl phosphate. Lys86 serves as a coordination point for L-aspartate. Carbamoyl phosphate is bound by residues Arg108, His136, and Gln139. Residues Arg169 and Arg223 each coordinate L-aspartate. Residues Gly264 and Pro265 each contribute to the carbamoyl phosphate site.

This sequence belongs to the aspartate/ornithine carbamoyltransferase superfamily. ATCase family. As to quaternary structure, heterododecamer (2C3:3R2) of six catalytic PyrB chains organized as two trimers (C3), and six regulatory PyrI chains organized as three dimers (R2).

The enzyme catalyses carbamoyl phosphate + L-aspartate = N-carbamoyl-L-aspartate + phosphate + H(+). The protein operates within pyrimidine metabolism; UMP biosynthesis via de novo pathway; (S)-dihydroorotate from bicarbonate: step 2/3. Catalyzes the condensation of carbamoyl phosphate and aspartate to form carbamoyl aspartate and inorganic phosphate, the committed step in the de novo pyrimidine nucleotide biosynthesis pathway. The chain is Aspartate carbamoyltransferase catalytic subunit from Ruegeria pomeroyi (strain ATCC 700808 / DSM 15171 / DSS-3) (Silicibacter pomeroyi).